Consider the following 247-residue polypeptide: UDP-N-acetyl-D-mannosaminuronic acid transferase (247 aa).

It belongs to the glycosyltransferase 26 family.

The catalysed reaction is UDP-N-acetyl-alpha-D-mannosaminouronate + N-acetyl-alpha-D-glucosaminyl-di-trans,octa-cis-undecaprenyl diphosphate = beta-D-ManNAcA-(1-&gt;4)-alpha-D-GlcNAc-di-trans,octa-cis-undecaprenyl diphosphate + UDP + H(+). It functions in the pathway bacterial outer membrane biogenesis; enterobacterial common antigen biosynthesis. Its function is as follows. Catalyzes the synthesis of Und-PP-GlcNAc-ManNAcA (Lipid II), the second lipid-linked intermediate involved in enterobacterial common antigen (ECA) synthesis. This is UDP-N-acetyl-D-mannosaminuronic acid transferase from Enterobacter sp. (strain 638).